The chain runs to 219 residues: MSLLVKICGLTTPETLDAALDAGAEMVGFVFFPPSPRHVGLTAARELGQQAKGRALKVALTVDADDATFENIVETLRPDLLQLHGRESIARIRDLKQRFGLPVMKAVAVATSADLAPLAGYADVCDRILFDARAPKDATRPGGLGATFDWHVLEALKLDRPFMVSGGLSADNVAEAVRITRAGGVDVSSGVERTPGVKDCDMIRNFIRAARAAEELSVQ.

The protein belongs to the TrpF family.

The enzyme catalyses N-(5-phospho-beta-D-ribosyl)anthranilate = 1-(2-carboxyphenylamino)-1-deoxy-D-ribulose 5-phosphate. The protein operates within amino-acid biosynthesis; L-tryptophan biosynthesis; L-tryptophan from chorismate: step 3/5. In Bradyrhizobium sp. (strain ORS 278), this protein is N-(5'-phosphoribosyl)anthranilate isomerase.